A 190-amino-acid polypeptide reads, in one-letter code: Elongation factor P-like protein (190 aa).

This sequence belongs to the elongation factor P family.

This is Elongation factor P-like protein from Erwinia tasmaniensis (strain DSM 17950 / CFBP 7177 / CIP 109463 / NCPPB 4357 / Et1/99).